A 1943-amino-acid chain; its full sequence is MEENESQKCEPCLPYSADRRQMQEQGKGNLHVTSPEDAECRRTKERLSNGNSRGSVSKSSRNIPRRHTLGGPRSSKEILGMQTSEMDRKREAFLEHLKQKYPHHASAIMGHQERLRDQTRSPKLSHSPQPPSLGDPVEHLSETSADSLEAMSEGDAPTPFSRGSRTRASLPVVRSTNQTKERSLGVLYLQYGDETKQLRMPNEITSADTIRALFVSAFPQQLTMKMLESPSVAIYIKDESRNVYYELNDVRNIQDRSLLKVYNKDPAHAFNHTPKTMNGDMRMQRELVYARGDGPGAPRPGSTAHPPHAIPNSPPSTPVPHSMPPSPSRIPYGGTRSMVVPGNATIPRDRISSLPVSRPISPSPSAILERRDVKPDEDMSGKNIAMYRNEGFYADPYLYHEGRMSIASSHGGHPLDVPDHIIAYHRTAIRSASAYCNPSMQAEMHMEQSLYRQKSRKYPDSHLPTLGSKTPPASPHRVSDLRMIDMHAHYNAHGPPHTMQPDRASPSRQAFKKEPGTLVYIEKPRSAAGLSSLVDLGPPLMEKQVFAYSTATIPKDRETRERMQAMEKQIASLTGLVQSALFKGPITSYSKDASSEKMMKTTANRNHTDSAGTPHVSGGKMLSALESTVPPSQPPPVGTSAIHMSLLEMRRSVAELRLQLQQMRQLQLQNQELLRAMMKKAELEISGKVMETMKRLEDPVQRQRVLVEQERQKYLHEEEKIVKKLCELEDFVEDLKKDSTAASRLVTLKDVEDGAFLLRQVGEAVATLKGEFPTLQNKMRAILRIEVEAVRFLKEEPHKLDSLLKRVRSMTDVLTMLRRHVTDGLLKGTDAAQAAQYMAMEKATAAEVLKSQEEAAHTSGQPFHSTGAPGDAKSEVVPLSGMMVRHAQSSPVVIQPSQHSVALLNPAQNLPHVASSPAVPQEATSTLQMSQAPQSPQIPMNGSAMQSLFIEEIHSVSAKNRAVSIEKAEKKWEEKRQNLDHYNGKEFEKLLEEAQANIMKSIPNLEMPPATGPLPRGDAPVDKVELSEDSPNSEQDLEKLGGKSPPPPPPPPRRSYLPGSGLTTTRSGDVVYTGRKENITAKASSEDAGPSPQTRATKYPAEEPASAWTPSPPPVTTSSSKDEEEEEEEGDKIMAELQAFQKCSFMDVNSNSHAEPSRADSHVKDTRSGATVPPKEKKNLEFFHEDVRKSDVEYENGPQMEFQKVTTGAVRPSDPPKWERGMENSISDASRTSEYKTEIIMKENSISNMSLLRDSRNYSQETVPKASFGFSGISPLEDEINKGSKISGLQYSIPDTENQTLNYGKTKEMEKQNTDKCHVSSHTRLTESSVHDFKTEDQEVITTDFGQVVLRPKEARHANVNPNEDGESSSSSPTEENAATDNIAFMITETTVQVLSSGEVHDIVSQKGEDIQTVNIDARKEMTPRQEGTDNEDPVVCLDKKPVIIIFDEPMDIRSAYKRLSTIFEECDEELERMMMEEKIEEEEEEENGDSVVQNNNTSQMSHKKVAPGNLRTGQQVETKSQPHSLATETRNPGGQEMNRTELNKFSHVDSPNSECKGEDATDDQFESPKKKFKFKFPKKQLAALTQAIRTGTKTGKKTLQVVVYEEEEEDGTLKQHKEAKRFEIARSQPEDTPENTVRRQEQPSIESTSPISRTDEIRKNTYRTLDSLEQTIKQLENTISEMSPKALVDTSCSSNRDSVASSSHIAQEASPRPLLVPDEGPTALEPPTSIPSASRKGSSGAPQTSRMPVPMSAKNRPGTLDKPGKQSKLQDPRQYRQANGSAKKSGGDFKPTSPSLPASKIPALSPSSGKSSSLPSSSGDSSNLPNPPATKPSIASNPLSPQTGPPAHSASLIPSVSNGSLKFQSLTHTGKGHHLSFSPQSQNGRAPPPLSFSSSPPSPASSVSLNQGAKGTRTIHTPSLTSYKAQNGSSSKATPSTAKETS.

Disordered stretches follow at residues 1 to 79 (MEEN…KEIL) and 112 to 177 (QERL…RSTN). Residues 38 to 47 (AECRRTKERL) are compositionally biased toward basic and acidic residues. Positions 48–62 (SNGNSRGSVSKSSRN) are enriched in polar residues. Ser169 is subject to Phosphoserine. At Tyr244 the chain carries Phosphotyrosine. A disordered region spans residues 290–331 (ARGDGPGAPRPGSTAHPPHAIPNSPPSTPVPHSMPPSPSRIP). The segment covering 308–328 (HAIPNSPPSTPVPHSMPPSPS) has biased composition (pro residues). An O-linked (GlcNAc) serine glycan is attached at Ser357. Phosphoserine is present on residues Ser361 and Ser365. Tyr393 is subject to Phosphotyrosine. The interval 456-476 (RKYPDSHLPTLGSKTPPASPH) is disordered. Position 470 is a phosphothreonine (Thr470). Phosphoserine is present on residues Ser474 and Ser526. Coiled coils occupy residues 557-581 (RETR…QSAL) and 644-685 (MSLL…ELEI). The residue at position 809 (Ser809) is a Phosphoserine. Residues 848–874 (VLKSQEEAAHTSGQPFHSTGAPGDAKS) are disordered. The stretch at 957-985 (SAKNRAVSIEKAEKKWEEKRQNLDHYNGK) forms a coiled coil. 3 disordered regions span residues 1003-1230 (PNLE…SDAS), 1305-1329 (KTKE…TESS), and 1352-1377 (PKEA…TEEN). Phosphoserine occurs at positions 1027, 1030, 1033, and 1044. Positions 1044–1053 (SPPPPPPPPR) are enriched in pro residues. 3 stretches are compositionally biased toward basic and acidic residues: residues 1155–1167 (EPSR…KDTR), 1174–1192 (PKEK…KSDV), and 1305–1318 (KTKE…DKCH). A compositionally biased stretch (polar residues) spans 1368 to 1377 (SSSSSPTEEN). At Ser1461 the chain carries Phosphoserine. Residues 1464–1490 (FEECDEELERMMMEEKIEEEEEEENGD) are a coiled coil. Disordered regions lie at residues 1481-1572 (EEEE…PKKK), 1606-1660 (EEEE…EIRK), and 1677-1943 (ENTI…KETS). 2 stretches are compositionally biased toward polar residues: residues 1491–1501 (SVVQNNNTSQM) and 1512–1533 (RTGQ…TRNP). 2 stretches are compositionally biased toward basic and acidic residues: residues 1539 to 1548 (NRTELNKFSH) and 1612 to 1625 (GTLK…RFEI). Residues 1643–1653 (QPSIESTSPIS) are compositionally biased toward polar residues. A coiled-coil region spans residues 1656–1686 (DEIRKNTYRTLDSLEQTIKQLENTISEMSPK). Polar residues-rich tracts occupy residues 1691 to 1706 (TSCS…SSHI) and 1731 to 1747 (IPSA…QTSR). Ser1739 is subject to Phosphoserine. Residues 1763-1775 (KPGKQSKLQDPRQ) are compositionally biased toward basic and acidic residues. The span at 1806–1825 (SPSSGKSSSLPSSSGDSSNL) shows a compositional bias: low complexity. Polar residues-rich tracts occupy residues 1834–1843 (SIASNPLSPQ) and 1853–1869 (LIPS…SLTH). Ser1841 is modified (phosphoserine). The segment covering 1892 to 1905 (SFSSSPPSPASSVS) has biased composition (low complexity). Phosphoserine occurs at positions 1896, 1899, and 1902. The span at 1906-1943 (LNQGAKGTRTIHTPSLTSYKAQNGSSSKATPSTAKETS) shows a compositional bias: polar residues.

In terms of assembly, interacts with CPNE4 (via VWFA domain).

The protein localises to the cytoplasm. It is found in the cytoskeleton. The protein resides in the microtubule organizing center. It localises to the centrosome. Its function is as follows. Required for normal development of intervertebral disks. The chain is Sickle tail protein homolog (KIAA1217) from Homo sapiens (Human).